The sequence spans 149 residues: Ribosome maturation factor RimP (149 aa).

It belongs to the RimP family.

The protein localises to the cytoplasm. Functionally, required for maturation of 30S ribosomal subunits. This Neisseria gonorrhoeae (strain NCCP11945) protein is Ribosome maturation factor RimP.